Consider the following 122-residue polypeptide: Large ribosomal subunit protein bL12 (122 aa).

The protein belongs to the bacterial ribosomal protein bL12 family. Homodimer. Part of the ribosomal stalk of the 50S ribosomal subunit. Forms a multimeric L10(L12)X complex, where L10 forms an elongated spine to which 2 to 4 L12 dimers bind in a sequential fashion. Binds GTP-bound translation factors.

Forms part of the ribosomal stalk which helps the ribosome interact with GTP-bound translation factors. Is thus essential for accurate translation. The protein is Large ribosomal subunit protein bL12 of Mycoplasma pneumoniae (strain ATCC 29342 / M129 / Subtype 1) (Mycoplasmoides pneumoniae).